The chain runs to 606 residues: Sulfite reductase [NADPH] flavoprotein alpha-component (606 aa).

The region spanning 68 to 206 is the Flavodoxin-like domain; that stretch reads ITILSASQTG…AAEAWRKEVT (139 aa). FMN is bound by residues 74-79, 121-124, and 157-166; these read SQTGNA, STQG, and LGDITYEHFA. An FAD-binding FR-type domain is found at 240–454; the sequence is ESPLTATLSV…VEHNDNFRLP (215 aa). FAD is bound by residues Thr-328, Gln-362, 392–395, 410–412, Tyr-416, and 425–428; these read RLYS, TVG, and GGAS. NADP(+) contacts are provided by residues 525 to 526, 531 to 535, and Asp-568; these read SR and KVYVQ. Position 606 (Tyr-606) interacts with FAD.

This sequence belongs to the NADPH-dependent sulphite reductase flavoprotein subunit CysJ family. In the N-terminal section; belongs to the flavodoxin family. It in the C-terminal section; belongs to the flavoprotein pyridine nucleotide cytochrome reductase family. Alpha(8)-beta(8). The alpha component is a flavoprotein, the beta component is a hemoprotein. FAD is required as a cofactor. Requires FMN as cofactor.

It catalyses the reaction hydrogen sulfide + 3 NADP(+) + 3 H2O = sulfite + 3 NADPH + 4 H(+). The protein operates within sulfur metabolism; hydrogen sulfide biosynthesis; hydrogen sulfide from sulfite (NADPH route): step 1/1. Its function is as follows. Component of the sulfite reductase complex that catalyzes the 6-electron reduction of sulfite to sulfide. This is one of several activities required for the biosynthesis of L-cysteine from sulfate. The flavoprotein component catalyzes the electron flow from NADPH -&gt; FAD -&gt; FMN to the hemoprotein component. In Zymomonas mobilis subsp. mobilis (strain ATCC 31821 / ZM4 / CP4), this protein is Sulfite reductase [NADPH] flavoprotein alpha-component.